Consider the following 414-residue polypeptide: Multifunctional CCA protein (414 aa).

ATP-binding residues include G8 and R11. CTP contacts are provided by G8 and R11. Mg(2+)-binding residues include D21 and D23. R91, R137, and R140 together coordinate ATP. Residues R91, R137, and R140 each contribute to the CTP site. Residues 228–329 enclose the HD domain; the sequence is TGIHTLMTLA…LKLFDAVDVW (102 aa).

It belongs to the tRNA nucleotidyltransferase/poly(A) polymerase family. Bacterial CCA-adding enzyme type 1 subfamily. In terms of assembly, monomer. Can also form homodimers and oligomers. Requires Mg(2+) as cofactor. Ni(2+) serves as cofactor.

It carries out the reaction a tRNA precursor + 2 CTP + ATP = a tRNA with a 3' CCA end + 3 diphosphate. The enzyme catalyses a tRNA with a 3' CCA end + 2 CTP + ATP = a tRNA with a 3' CCACCA end + 3 diphosphate. Catalyzes the addition and repair of the essential 3'-terminal CCA sequence in tRNAs without using a nucleic acid template. Adds these three nucleotides in the order of C, C, and A to the tRNA nucleotide-73, using CTP and ATP as substrates and producing inorganic pyrophosphate. tRNA 3'-terminal CCA addition is required both for tRNA processing and repair. Also involved in tRNA surveillance by mediating tandem CCA addition to generate a CCACCA at the 3' terminus of unstable tRNAs. While stable tRNAs receive only 3'-terminal CCA, unstable tRNAs are marked with CCACCA and rapidly degraded. In Serratia proteamaculans (strain 568), this protein is Multifunctional CCA protein.